Here is a 90-residue protein sequence, read N- to C-terminus: Probable Fe(2+)-trafficking protein (90 aa).

This sequence belongs to the Fe(2+)-trafficking protein family.

Functionally, could be a mediator in iron transactions between iron acquisition and iron-requiring processes, such as synthesis and/or repair of Fe-S clusters in biosynthetic enzymes. The protein is Probable Fe(2+)-trafficking protein of Albidiferax ferrireducens (strain ATCC BAA-621 / DSM 15236 / T118) (Rhodoferax ferrireducens).